A 253-amino-acid polypeptide reads, in one-letter code: Testis-expressed protein 47 (253 aa).

As to expression, testis-specific.

In Homo sapiens (Human), this protein is Testis-expressed protein 47.